Consider the following 96-residue polypeptide: Co-chaperonin GroES (96 aa).

The protein belongs to the GroES chaperonin family. As to quaternary structure, heptamer of 7 subunits arranged in a ring. Interacts with the chaperonin GroEL.

Its subcellular location is the cytoplasm. In terms of biological role, together with the chaperonin GroEL, plays an essential role in assisting protein folding. The GroEL-GroES system forms a nano-cage that allows encapsulation of the non-native substrate proteins and provides a physical environment optimized to promote and accelerate protein folding. GroES binds to the apical surface of the GroEL ring, thereby capping the opening of the GroEL channel. This chain is Co-chaperonin GroES, found in Shewanella oneidensis (strain ATCC 700550 / JCM 31522 / CIP 106686 / LMG 19005 / NCIMB 14063 / MR-1).